Consider the following 530-residue polypeptide: MARTGWTSPIPLCVSLLLTCGFAEAGKLLVVPMDGSHWFTMQSVVEKLILRGHEVVVVMPEVSWQLGKSLNCTVKTYSTSYTLEDLDREFMDFADAQWKAQVRSLFSLFLSSSNGFFNLFFSHCRSLFNDRKLVEYLKESSFDAVFLDPFDACGLIVAKYFSLPSVVFARGIACHYLEEGAQCPAPLSYVPRILLGFSDAMTFKERVRNHIMHLEEHLFCQYFSKNALEIASEILQTPVTAYDLYSHTSIWLLRTDFVLDYPKPVMPNMIFIGGINCHQGKPLPMEFEAYINASGEHGIVVFSLGSMVSEIPEKKAMAIADALGKIPQTVLWRYTGTRPSNLANNTILVKWLPQNDLLGHPMTRAFITHAGSHGVYESICNGVPMVMMPLFGDQMDNAKRMETKGAGVTLNVLEMTSEDLENALKAVINDKSYKENIMRLSSLHKDRPVEPLDLAVFWVEFVMRHKGAPHLRPAAHDLTWYQYHSLDVIGFLLAVVLTVAFITFKCCAYGYRKCLGKKGRVKKAHKSKTH.

The N-terminal stretch at 1 to 25 (MARTGWTSPIPLCVSLLLTCGFAEA) is a signal peptide. 3 N-linked (GlcNAc...) asparagine glycosylation sites follow: N71, N292, and N344. A helical transmembrane segment spans residues 488–504 (VIGFLLAVVLTVAFITF).

The protein belongs to the UDP-glycosyltransferase family. In terms of assembly, homodimer. Homooligomer. Interacts with UGT1A1, UGT1A3, UGT1A4, UGT1A6, UGT1A7, UGT1A9 and UGT1A10 to form heterodimers. Isoform 1 interacts with isoform 2/i2 suggesting that oligomerization is involved in negative regulation of transferase activity by isoform 2. Isoform 1 also interacts with respective i2 isoforms of UGT1A1, UGT1A3, UGT1A4, UGT1A6, UGT1A7, UGT1A9 and UGT1A10. As to expression, expressed in kidney, colon and small intestine. Not expressed in liver. Expressed in liver, kidney, colon and small intestine.

The protein resides in the endoplasmic reticulum membrane. The catalysed reaction is glucuronate acceptor + UDP-alpha-D-glucuronate = acceptor beta-D-glucuronoside + UDP + H(+). It catalyses the reaction 17beta-estradiol + UDP-alpha-D-glucuronate = 17beta-estradiol 3-O-(beta-D-glucuronate) + UDP + H(+). The enzyme catalyses 17alpha-estradiol + UDP-alpha-D-glucuronate = 17alpha-estradiol 3-O-(beta-D-glucuronate) + UDP + H(+). It carries out the reaction estrone + UDP-alpha-D-glucuronate = estrone 3-O-(beta-D-glucuronate) + UDP + H(+). The catalysed reaction is 16alpha,17alpha-estriol + UDP-alpha-D-glucuronate = 16alpha,17alpha-estriol 3-O-(beta-D-glucuronate) + UDP + H(+). It catalyses the reaction 2-hydroxy-17beta-estradiol + UDP-alpha-D-glucuronate = 2-hydroxy-17beta-estradiol 3-O-(beta-D-glucuronate) + UDP + H(+). The enzyme catalyses 2-hydroxy-17beta-estradiol + UDP-alpha-D-glucuronate = 17beta-estradiol 2-O-(beta-D-glucuronate) + UDP + H(+). It carries out the reaction 2-hydroxyestrone + UDP-alpha-D-glucuronate = 2-hydroxyestrone 3-O-(beta-D-glucuronate) + UDP + H(+). The catalysed reaction is 4-hydroxy-17beta-estradiol + UDP-alpha-D-glucuronate = 4-hydroxy-17beta-estradiol 3-O-(beta-D-glucuronate) + UDP + H(+). It catalyses the reaction 4-hydroxy-17beta-estradiol + UDP-alpha-D-glucuronate = 17beta-estradiol 4-O-(beta-D-glucuronate) + UDP + H(+). The enzyme catalyses 4-hydroxyestrone + UDP-alpha-D-glucuronate = 4-hydroxyestrone 3-O-(beta-D-glucuronate) + UDP + H(+). It carries out the reaction 4-hydroxyestrone + UDP-alpha-D-glucuronate = estrone 4-O-(beta-D-glucuronate) + UDP + H(+). The catalysed reaction is 2-methoxy-17beta-estradiol + UDP-alpha-D-glucuronate = 2-methoxy-17beta-estradiol 3-O-(beta-D-glucuronate) + UDP + H(+). It catalyses the reaction 2-methoxyestrone + UDP-alpha-D-glucuronate = 2-methoxyestrone 3-O-(beta-D-glucuronate) + UDP + H(+). The enzyme catalyses 4-methoxy-17beta-estradiol + UDP-alpha-D-glucuronate = 4-methoxy-17beta-estradiol 3-O-(beta-D-glucuronate) + UDP + H(+). It carries out the reaction 4-methoxyestrone + UDP-alpha-D-glucuronate = 4-methoxyestrone 3-O-(beta-D-glucuronate) + UDP + H(+). The catalysed reaction is 17beta-hydroxy-5alpha-androstan-3-one + UDP-alpha-D-glucuronate = 5alpha-dihydrotestosterone 17-O-(beta-D-glucuronate) + UDP + H(+). It catalyses the reaction 5alpha-dihydrotestosterone 17-O-(beta-D-glucuronate) + UDP-alpha-D-glucuronate = 5alpha-dihydrotestosterone 17-O-[beta-D-glucuronosyl-(1-&gt;2)-glucuronate] + UDP + H(+). The enzyme catalyses prunetin + UDP-alpha-D-glucuronate = prunetin-4'-O-beta-D-glucuronide + UDP. It carries out the reaction prunetin + UDP-alpha-D-glucuronate = prunetin-5-O-beta-D-glucuronide + UDP. The catalysed reaction is candesartan + UDP-alpha-D-glucuronate = candesartan O-beta-D-glucuronoside + UDP. It catalyses the reaction mycophenolate + UDP-alpha-D-glucuronate = mycophenolate 7-O-beta-D-glucuronide + UDP + H(+). The enzyme catalyses (E)-ferulate + UDP-alpha-D-glucuronate = (E)-4-O-(beta-D-glucuronosyl)-ferulate + UDP + H(+). It carries out the reaction (E)-ferulate + UDP-alpha-D-glucuronate = (E)-ferulic acid beta-D-glucuronate ester + UDP. UDP-glucuronosyltransferase (UGT) that catalyzes phase II biotransformation reactions in which lipophilic substrates are conjugated with glucuronic acid to increase the metabolite's water solubility, thereby facilitating excretion into either the urine or bile. Essential for the elimination and detoxification of drugs, xenobiotics and endogenous compounds. Catalyzes the glucuronidation of endogenous steroid hormones such as androgens and estrogens. Produces dihydrotestosterone (DHT) diglucuronide from the DHT after two subsequent glucoronidation steps. Involved in the glucuronidation of the phytochemical ferulic acid at the phenolic or the carboxylic acid group. Also catalyzes the glucuronidation of the isoflavones genistein, daidzein, glycitein, formononetin, biochanin A and prunetin, which are phytoestrogens with anticancer and cardiovascular properties. Involved in the glucuronidation of the AGTR1 angiotensin receptor antagonist caderastan, a drug which can inhibit the effect of angiotensin II. Also metabolizes mycophenolate, an immunosuppressive agent. In terms of biological role, lacks UGT glucuronidation activity but acts as a negative regulator of isoform 1. This Homo sapiens (Human) protein is UDP-glucuronosyltransferase 1A8.